The primary structure comprises 26 residues: Nicotinic acetylcholine receptor-binding protein Mnn-1A (26 aa).

Cys3 and Cys22 are disulfide-bonded.

This sequence belongs to the three-finger toxin family. Short-chain subfamily. As to expression, expressed by the venom gland.

The protein localises to the secreted. In terms of biological role, binds and may inhibit nicotinic acetylcholine receptors (nAChR). The chain is Nicotinic acetylcholine receptor-binding protein Mnn-1A from Micrurus nigrocinctus (Central American coral snake).